The sequence spans 317 residues: MNKFKGNKVVLIGNGAVGSSYAFSLVNQSIVDELVIIDLDTEKVRGDVMDLKHATPYSPTTVRVKAGEYSDCHDADLVVICAGAAQKPGETRLDLVSKNLKIFKSIVGEVMASKFDGIFLVATNPVDILAYATWKFSGLPKERVIGSGTILDSARFRLLLSEAFDVAPRSVDAQIIGEHGDTELPVWSHANIAGQPLKTLLEQRPEGKAQIEQIFVQTRDAAYDIIQAKGATYYGVAMGLARITEAIFRNEDAVLTVSALLEGEYEEEDVYIGVPAVINRNGIRNVVEIPLNDEEQSKFAHSAKTLKDIMAEAEELK.

NAD(+)-binding positions include V17, D38, K43, Y69, and 83–84 (GA). The substrate site is built by Q86 and R92. Residues S105, 122–124 (ATN), and S147 each bind NAD(+). 124–127 (NPVD) contributes to the substrate binding site. Residue 152-155 (DSAR) coordinates substrate. H179 acts as the Proton acceptor in catalysis. Y223 carries the phosphotyrosine modification. T232 lines the substrate pocket.

This sequence belongs to the LDH/MDH superfamily. LDH family. In terms of assembly, homotetramer.

It localises to the cytoplasm. It catalyses the reaction (S)-lactate + NAD(+) = pyruvate + NADH + H(+). It participates in fermentation; pyruvate fermentation to lactate; (S)-lactate from pyruvate: step 1/1. Functionally, catalyzes the conversion of lactate to pyruvate (Potential). Appears to be the primary factor that allows S.aureus growth during nitrosative stress in both aerobically and anaerobically cultured cells. This is L-lactate dehydrogenase 1 from Staphylococcus aureus (strain USA300).